We begin with the raw amino-acid sequence, 70 residues long: uncharacterized protein (70 aa).

This is an uncharacterized protein from Escherichia coli O157:H7.